Consider the following 733-residue polypeptide: Polyribonucleotide nucleotidyltransferase (733 aa).

Residues Asp488 and Asp494 each coordinate Mg(2+). The region spanning 555-614 (PRIEMMTIPVEKIREVIGSGGKVIREIVEQTGAKINIEDDGTIKIASPDTKSIETAKSWI) is the KH domain. An S1 motif domain is found at 624 to 692 (GTIYQGTVVK…ERGKIRLSMK (69 aa)). The disordered stretch occupies residues 698 to 733 (TGKEIPQDDLIKTEKEQNPDEKNKSEKKRHNRKKED). The segment covering 702–721 (IPQDDLIKTEKEQNPDEKNK) has biased composition (basic and acidic residues). Basic residues predominate over residues 722-733 (SEKKRHNRKKED).

The protein belongs to the polyribonucleotide nucleotidyltransferase family. It depends on Mg(2+) as a cofactor.

The protein localises to the cytoplasm. It catalyses the reaction RNA(n+1) + phosphate = RNA(n) + a ribonucleoside 5'-diphosphate. In terms of biological role, involved in mRNA degradation. Catalyzes the phosphorolysis of single-stranded polyribonucleotides processively in the 3'- to 5'-direction. The sequence is that of Polyribonucleotide nucleotidyltransferase from Bartonella bacilliformis (strain ATCC 35685 / KC583 / Herrer 020/F12,63).